The following is a 315-amino-acid chain: MNELATPDNPLRIGTRASPLAMAQAHMAAAALIAAHGLAMAALEIVPMTATGDRIQDRALAEVGGKALWTRELDAALDAGTIDVAVHSLKDVETLRDARFFLGAMLERADPRDRLVVREGIAAQKISELPHGARLGTSSPRRAAQVRRLRPDLDTVLLRGNVATRLAKLAAGEADATLLAAAGLERLGMHDIGAVQGTELLLPAASQGAIGIECRADDAATIALLAAIDHAPTHRAVAAERALLAVLGGDCRSPVAAYAEWQADGVLRLDAEIFSEDGADHVAGHVIVTDAGVVAALGHRLLAEAPPSIRRLFAT.

Cys251 carries the S-(dipyrrolylmethanemethyl)cysteine modification.

This sequence belongs to the HMBS family. In terms of assembly, monomer. The cofactor is dipyrromethane.

It carries out the reaction 4 porphobilinogen + H2O = hydroxymethylbilane + 4 NH4(+). Its pathway is porphyrin-containing compound metabolism; protoporphyrin-IX biosynthesis; coproporphyrinogen-III from 5-aminolevulinate: step 2/4. Tetrapolymerization of the monopyrrole PBG into the hydroxymethylbilane pre-uroporphyrinogen in several discrete steps. This Sphingopyxis alaskensis (strain DSM 13593 / LMG 18877 / RB2256) (Sphingomonas alaskensis) protein is Porphobilinogen deaminase.